Reading from the N-terminus, the 408-residue chain is Aminopeptidase T (408 aa).

A divalent metal cation-binding residues include glutamate 250, glutamate 316, glutamate 340, histidine 345, histidine 376, and aspartate 378.

Belongs to the peptidase M29 family. Homodimer. Co(2+) is required as a cofactor. Requires Zn(2+) as cofactor. It depends on Mg(2+) as a cofactor.

Metal-dependent exopeptidase. The chain is Aminopeptidase T from Thermus aquaticus.